A 193-amino-acid polypeptide reads, in one-letter code: ATP-dependent Clp protease proteolytic subunit (193 aa).

S98 acts as the Nucleophile in catalysis. H123 is a catalytic residue.

It belongs to the peptidase S14 family. As to quaternary structure, fourteen ClpP subunits assemble into 2 heptameric rings which stack back to back to give a disk-like structure with a central cavity, resembling the structure of eukaryotic proteasomes.

It localises to the cytoplasm. It carries out the reaction Hydrolysis of proteins to small peptides in the presence of ATP and magnesium. alpha-casein is the usual test substrate. In the absence of ATP, only oligopeptides shorter than five residues are hydrolyzed (such as succinyl-Leu-Tyr-|-NHMec, and Leu-Tyr-Leu-|-Tyr-Trp, in which cleavage of the -Tyr-|-Leu- and -Tyr-|-Trp bonds also occurs).. Cleaves peptides in various proteins in a process that requires ATP hydrolysis. Has a chymotrypsin-like activity. Plays a major role in the degradation of misfolded proteins. The chain is ATP-dependent Clp protease proteolytic subunit from Agathobacter rectalis (strain ATCC 33656 / DSM 3377 / JCM 17463 / KCTC 5835 / VPI 0990) (Eubacterium rectale).